Here is a 235-residue protein sequence, read N- to C-terminus: Putative 4'-phosphopantetheinyl transferase HI_0152 (235 aa).

Mg(2+) is bound by residues aspartate 112, glutamate 114, and glutamate 155.

This sequence belongs to the P-Pant transferase superfamily. Gsp/Sfp/HetI/AcpT family. Requires Mg(2+) as cofactor.

Its function is as follows. May transfer the 4'-phosphopantetheine moiety from coenzyme A (CoA) to a serine residue of a carrier protein domain. In Haemophilus influenzae (strain ATCC 51907 / DSM 11121 / KW20 / Rd), this protein is Putative 4'-phosphopantetheinyl transferase HI_0152.